We begin with the raw amino-acid sequence, 332 residues long: Fructose-1,6-bisphosphatase class 1 (332 aa).

Mg(2+) contacts are provided by glutamate 89, aspartate 110, leucine 112, and aspartate 113. Residues 113–116, asparagine 206, tyrosine 239, 257–259, and lysine 269 each bind substrate; these read DGSS and YLY. Glutamate 275 is a Mg(2+) binding site.

The protein belongs to the FBPase class 1 family. In terms of assembly, homotetramer. Mg(2+) serves as cofactor.

It localises to the cytoplasm. It carries out the reaction beta-D-fructose 1,6-bisphosphate + H2O = beta-D-fructose 6-phosphate + phosphate. It participates in carbohydrate biosynthesis; gluconeogenesis. The polypeptide is Fructose-1,6-bisphosphatase class 1 (Enterobacter sp. (strain 638)).